Reading from the N-terminus, the 431-residue chain is Tyrosine--tRNA ligase (431 aa).

Tyrosine 34 contributes to the L-tyrosine binding site. A 'HIGH' region motif is present at residues proline 39–histidine 48. Residues tyrosine 171 and glutamine 175 each coordinate L-tyrosine. The 'KMSKS' region signature appears at lysine 231 to threonine 235. Lysine 234 is a binding site for ATP. The 70-residue stretch at isoleucine 353–lysine 422 folds into the S4 RNA-binding domain.

It belongs to the class-I aminoacyl-tRNA synthetase family. TyrS type 1 subfamily. Homodimer.

Its subcellular location is the cytoplasm. The catalysed reaction is tRNA(Tyr) + L-tyrosine + ATP = L-tyrosyl-tRNA(Tyr) + AMP + diphosphate + H(+). Functionally, catalyzes the attachment of tyrosine to tRNA(Tyr) in a two-step reaction: tyrosine is first activated by ATP to form Tyr-AMP and then transferred to the acceptor end of tRNA(Tyr). The protein is Tyrosine--tRNA ligase of Neisseria meningitidis serogroup C / serotype 2a (strain ATCC 700532 / DSM 15464 / FAM18).